Here is a 495-residue protein sequence, read N- to C-terminus: UDP-glycosyltransferase 73C12 (495 aa).

The active-site Proton acceptor is the H24. H24 is a binding site for an anthocyanidin. D129 serves as the catalytic Charge relay. 7 residues coordinate UDP-alpha-D-glucose: A356, Q358, H373, W376, N377, S378, and E381. A396 lines the an anthocyanidin pocket. D397 and Q398 together coordinate UDP-alpha-D-glucose.

The protein belongs to the UDP-glycosyltransferase family.

It carries out the reaction oleanolate + UDP-alpha-D-glucose = oleanolate 3-O-beta-D-glucoside + UDP + H(+). Its function is as follows. Catalyzes the transfer of a glucose (Glc) moiety from UDP-Glc to the C-3 position of the oleanane sapogenins oleanolate and hederagenin, and to the C-28 carboxylic group of the lupane sapogenin betulinate. The monoglucosylated hederagenin 3-O-beta-D-glucoside is a feeding deterrent of the yellow-striped flea beetle (Phyllotreta nemorum). In Barbarea vulgaris (Yellow rocket), this protein is UDP-glycosyltransferase 73C12.